Reading from the N-terminus, the 142-residue chain is Large ribosomal subunit protein uL11 (142 aa).

Ala2 carries the n,N,N-trimethylalanine modification. An N6,N6,N6-trimethyllysine mark is found at Lys4 and Lys40.

The protein belongs to the universal ribosomal protein uL11 family. In terms of assembly, part of the ribosomal stalk of the 50S ribosomal subunit. Interacts with L10 and the large rRNA to form the base of the stalk. L10 forms an elongated spine to which L12 dimers bind in a sequential fashion forming a multimeric L10(L12)X complex. In terms of processing, one or more lysine residues are methylated.

Functionally, forms part of the ribosomal stalk which helps the ribosome interact with GTP-bound translation factors. The polypeptide is Large ribosomal subunit protein uL11 (Shigella flexneri).